We begin with the raw amino-acid sequence, 116 residues long: Flagellar transcriptional regulator FlhD (116 aa).

The protein belongs to the FlhD family. Homodimer; disulfide-linked. Forms a heterohexamer composed of two FlhC and four FlhD subunits. Each FlhC binds a FlhD dimer, forming a heterotrimer, and a hexamer assembles by dimerization of two heterotrimers.

The protein resides in the cytoplasm. In terms of biological role, functions in complex with FlhC as a master transcriptional regulator that regulates transcription of several flagellar and non-flagellar operons by binding to their promoter region. Activates expression of class 2 flagellar genes, including fliA, which is a flagellum-specific sigma factor that turns on the class 3 genes. Also regulates genes whose products function in a variety of physiological pathways. The sequence is that of Flagellar transcriptional regulator FlhD from Proteus mirabilis (strain HI4320).